The following is a 270-amino-acid chain: Bifunctional folate synthesis protein (270 aa).

The DHNA stretch occupies residues Met1–Lys119. Substrate is bound by residues Glu21, Tyr53, and Ile72 to Glu73. Lys99 functions as the Proton donor/acceptor; for DHNA activity in the catalytic mechanism. The interval Gln120–Lys270 is HPPK. Residues Thr160 to Trp163, Phe171 to Asn173, Leu192 to Glu195, Arg200 to Leu215, Asp227 to Pro233, and Arg238 to Phe240 each bind ATP. Mg(2+) is bound by residues Asp212 and Asp214.

In the N-terminal section; belongs to the DHNA family. It in the C-terminal section; belongs to the HPPK family. In terms of assembly, homotrimer or homotetramer.

The catalysed reaction is 7,8-dihydroneopterin = 6-hydroxymethyl-7,8-dihydropterin + glycolaldehyde. The enzyme catalyses 6-hydroxymethyl-7,8-dihydropterin + ATP = (7,8-dihydropterin-6-yl)methyl diphosphate + AMP + H(+). The protein operates within cofactor biosynthesis; tetrahydrofolate biosynthesis; 2-amino-4-hydroxy-6-hydroxymethyl-7,8-dihydropteridine diphosphate from 7,8-dihydroneopterin triphosphate: step 3/4. Its pathway is cofactor biosynthesis; tetrahydrofolate biosynthesis; 2-amino-4-hydroxy-6-hydroxymethyl-7,8-dihydropteridine diphosphate from 7,8-dihydroneopterin triphosphate: step 4/4. Functionally, catalyzes two sequential steps of tetrahydrofolate biosynthesis, the conversion of 7,8-dihydroneopterin to 6-hydroxymethyl-7,8-dihydropterin diphosphate. This chain is Bifunctional folate synthesis protein, found in Streptococcus pneumoniae serotype 4 (strain ATCC BAA-334 / TIGR4).